Consider the following 280-residue polypeptide: Mitochondrial outer membrane protein porin 2 (280 aa).

It belongs to the eukaryotic mitochondrial porin (TC 1.B.8.1) family. In terms of tissue distribution, expressed in roots, stems, leaves, palea, lemma and pollen.

Its subcellular location is the mitochondrion outer membrane. In terms of biological role, forms a channel through the mitochondrial outer membrane that allows diffusion of small hydrophilic molecules. The channel adopts an open conformation at low or zero membrane potential and a closed conformation at potentials above 30-40 mV. The open state has a weak anion selectivity whereas the closed state is cation-selective. This is Mitochondrial outer membrane protein porin 2 (VDAC2) from Oryza sativa subsp. japonica (Rice).